A 592-amino-acid polypeptide reads, in one-letter code: Ichor (592 aa).

The segment covering 114-123 has biased composition (polar residues); it reads NNNYMQSAYH. Disordered regions lie at residues 114 to 156, 343 to 377, 416 to 439, and 459 to 527; these read NNNY…VSSS, LQNRLQNGPPNGNSSGGGGGANQGAGIKGDPQAPT, LSNPTNNQATGNLHQQGGYSMQAS, and HTTT…DLSG. Residues 124 to 148 are compositionally biased toward low complexity; the sequence is PQNQSNPTSTTQSNGGSNSNSNNSN. Gly residues predominate over residues 356-369; the sequence is SSGGGGGANQGAGI. Polar residues predominate over residues 459 to 469; the sequence is HTTTASTTGSE. Residues 488-500 show a composition bias toward low complexity; the sequence is QQQQQQQQQQQQQ. The segment covering 507–524 has biased composition (polar residues); it reads PTTPQMSAISPSGFSASD. C2H2-type zinc fingers lie at residues 536-558 and 564-586; these read HRCSICNRGFLNKSNIKVHLRTH and FRCDVCAKAFRQKAHLLKHQQIH.

It localises to the nucleus. In terms of biological role, transcriptional activator. In tracheal terminal cells, regulates the transcription of factors involved in the formation of a mature apical extracellular matrix (aECM) which is essential for the integrity and shape of seamless tubes. This Drosophila melanogaster (Fruit fly) protein is Ichor.